The sequence spans 232 residues: Ureidoacrylate amidohydrolase RutB (232 aa).

D26 (proton acceptor) is an active-site residue. Residue K135 is part of the active site. The Nucleophile role is filled by C168.

The protein belongs to the isochorismatase family. RutB subfamily.

It catalyses the reaction (Z)-3-ureidoacrylate + H2O + H(+) = (Z)-3-aminoacrylate + NH4(+) + CO2. The catalysed reaction is (Z)-3-ureidoacrylate + H2O = (Z)-3-aminoacrylate + carbamate + H(+). The enzyme catalyses (Z)-2-methylureidoacrylate + H2O + H(+) = (Z)-2-methylaminoacrylate + NH4(+) + CO2. Its function is as follows. Hydrolyzes ureidoacrylate to form aminoacrylate and carbamate. The carbamate hydrolyzes spontaneously, thereby releasing one of the nitrogen atoms of the pyrimidine ring as ammonia and one of its carbon atoms as CO2. The polypeptide is Ureidoacrylate amidohydrolase RutB (Cronobacter turicensis (strain DSM 18703 / CCUG 55852 / LMG 23827 / z3032)).